The primary structure comprises 515 residues: Bifunctional dihydrofolate reductase-thymidylate synthase (515 aa).

Positions 26–228 constitute a DHFR domain; it reads AFSIVVAADQ…LSYEIMKYVP (203 aa). Val-30 is a substrate binding site. NADP(+) contacts are provided by residues Ala-32, 38–44, 81–83, and 101–104; these read GIGDGET, RKT, and LSCR. Substrate-binding residues include Ile-154, Tyr-160, and Thr-178. Residue 155 to 162 coordinates NADP(+); it reads GGARVYTE. Residues 233-515 are thymidylate synthase; the sequence is ERQYLELIDR…YPPIKMEMAV (283 aa). Arg-253 contacts dUMP. Residue Cys-395 is part of the active site. Residues His-396, 416-420, Asn-428, and 458-460 contribute to the dUMP site; these read QRCCD and HVY.

In the N-terminal section; belongs to the dihydrofolate reductase family. It in the C-terminal section; belongs to the thymidylate synthase family.

The catalysed reaction is (6S)-5,6,7,8-tetrahydrofolate + NADP(+) = 7,8-dihydrofolate + NADPH + H(+). It carries out the reaction dUMP + (6R)-5,10-methylene-5,6,7,8-tetrahydrofolate = 7,8-dihydrofolate + dTMP. Its pathway is cofactor biosynthesis; tetrahydrofolate biosynthesis; 5,6,7,8-tetrahydrofolate from 7,8-dihydrofolate: step 1/1. Functionally, bifunctional enzyme. Involved in de novo dTMP biosynthesis. Key enzyme in folate metabolism. Catalyzes an essential reaction for de novo glycine and purine synthesis, DNA precursor synthesis, and for the conversion of dUMP to dTMP. This Crithidia fasciculata protein is Bifunctional dihydrofolate reductase-thymidylate synthase.